A 107-amino-acid chain; its full sequence is Pathogenesis-related protein PR-4 (107 aa).

The Barwin domain occupies 1-107 (QNINWDLRTA…VNYDFVDCGD (107 aa)). 3 disulfide bridges follow: C14–C46, C35–C69, and C49–C105.

In terms of tissue distribution, preferentially expressed in the tissue surrounding the abscission zone of fruitlets.

The protein localises to the secreted. It localises to the cell wall. Functionally, may be involved in protecting plant tissues from pathogen infection. This is Pathogenesis-related protein PR-4 from Prunus persica (Peach).